The following is a 252-amino-acid chain: Hydroxyacylglutathione hydrolase (252 aa).

The Zn(2+) site is built by His-54, His-56, Asp-58, His-59, His-111, Asp-128, and His-166.

It belongs to the metallo-beta-lactamase superfamily. Glyoxalase II family. Monomer. Zn(2+) is required as a cofactor.

The catalysed reaction is an S-(2-hydroxyacyl)glutathione + H2O = a 2-hydroxy carboxylate + glutathione + H(+). The protein operates within secondary metabolite metabolism; methylglyoxal degradation; (R)-lactate from methylglyoxal: step 2/2. In terms of biological role, thiolesterase that catalyzes the hydrolysis of S-D-lactoyl-glutathione to form glutathione and D-lactic acid. The polypeptide is Hydroxyacylglutathione hydrolase (Aliivibrio fischeri (strain MJ11) (Vibrio fischeri)).